The primary structure comprises 502 residues: Pentatricopeptide repeat-containing protein At4g01990, mitochondrial (502 aa).

The transit peptide at 1–13 (MMHSVSRLARRFC) directs the protein to the mitochondrion. 7 PPR repeats span residues 139–173 (NQST…NHVS), 174–208 (NSLP…SITP), 209–243 (CDIT…GEGI), 245–275 (SWNT…LENN), 280–310 (VRDC…LKKR), 315–345 (NNSS…WEST), and 350–381 (DMRM…MKKC).

Belongs to the PPR family. P subfamily.

The protein localises to the mitochondrion. This is Pentatricopeptide repeat-containing protein At4g01990, mitochondrial from Arabidopsis thaliana (Mouse-ear cress).